A 348-amino-acid polypeptide reads, in one-letter code: tRNA N6-adenosine threonylcarbamoyltransferase (348 aa).

His-115 and His-119 together coordinate Fe cation. Residues 138 to 142 (LVSGG), Asp-171, Gly-184, and Asn-278 contribute to the substrate site. Asp-306 lines the Fe cation pocket.

The protein belongs to the KAE1 / TsaD family. Fe(2+) serves as cofactor.

It is found in the cytoplasm. The catalysed reaction is L-threonylcarbamoyladenylate + adenosine(37) in tRNA = N(6)-L-threonylcarbamoyladenosine(37) in tRNA + AMP + H(+). Required for the formation of a threonylcarbamoyl group on adenosine at position 37 (t(6)A37) in tRNAs that read codons beginning with adenine. Is involved in the transfer of the threonylcarbamoyl moiety of threonylcarbamoyl-AMP (TC-AMP) to the N6 group of A37, together with TsaE and TsaB. TsaD likely plays a direct catalytic role in this reaction. This chain is tRNA N6-adenosine threonylcarbamoyltransferase, found in Methylibium petroleiphilum (strain ATCC BAA-1232 / LMG 22953 / PM1).